The chain runs to 146 residues: Hemoglobin subunit beta (146 aa).

Valine 1 carries the post-translational modification N-acetylvaline. The 145-residue stretch at histidine 2–histidine 146 folds into the Globin domain. Threonine 12 is subject to Phosphothreonine. Serine 44 is modified (phosphoserine). Lysine 59 carries the post-translational modification N6-acetyllysine. Histidine 63 lines the heme b pocket. Position 82 is an N6-acetyllysine (lysine 82). Histidine 92 lines the heme b pocket. Cysteine 93 is subject to S-nitrosocysteine. An N6-acetyllysine modification is found at lysine 144.

This sequence belongs to the globin family. Heterotetramer of two alpha chains and two beta chains. As to expression, red blood cells.

Involved in oxygen transport from the lung to the various peripheral tissues. The chain is Hemoglobin subunit beta (HBB) from Tupaia glis (Common tree shrew).